The sequence spans 305 residues: Homoserine O-acetyltransferase (305 aa).

Catalysis depends on Cys142, which acts as the Acyl-thioester intermediate. Positions 163 and 192 each coordinate substrate. His235 (proton acceptor) is an active-site residue. The active site involves Glu237. Arg249 contacts substrate.

The protein belongs to the MetA family.

It is found in the cytoplasm. It catalyses the reaction L-homoserine + acetyl-CoA = O-acetyl-L-homoserine + CoA. The protein operates within amino-acid biosynthesis; L-methionine biosynthesis via de novo pathway; O-acetyl-L-homoserine from L-homoserine: step 1/1. Its function is as follows. Transfers an acetyl group from acetyl-CoA to L-homoserine, forming acetyl-L-homoserine. The sequence is that of Homoserine O-acetyltransferase from Bacteroides fragilis (strain ATCC 25285 / DSM 2151 / CCUG 4856 / JCM 11019 / LMG 10263 / NCTC 9343 / Onslow / VPI 2553 / EN-2).